A 470-amino-acid polypeptide reads, in one-letter code: Fumarate hydratase class II (470 aa).

Residues 99–101 (SGT), 129–132 (HPND), 139–141 (SSN), and T187 each bind substrate. H188 (proton donor/acceptor) is an active-site residue. Residue S318 is part of the active site. Residues S319 and 324–326 (KIN) each bind substrate.

This sequence belongs to the class-II fumarase/aspartase family. Fumarase subfamily. As to quaternary structure, homotetramer.

The protein localises to the cytoplasm. The catalysed reaction is (S)-malate = fumarate + H2O. It functions in the pathway carbohydrate metabolism; tricarboxylic acid cycle; (S)-malate from fumarate: step 1/1. Involved in the TCA cycle. Catalyzes the stereospecific interconversion of fumarate to L-malate. This Halobacterium salinarum (strain ATCC 700922 / JCM 11081 / NRC-1) (Halobacterium halobium) protein is Fumarate hydratase class II.